A 491-amino-acid polypeptide reads, in one-letter code: Protein OrfX3 (491 aa).

This sequence belongs to the TULIP P47 family. As to quaternary structure, heterodimer of OrfX1 and OrfX3; crystallizes as a dimer of heterodimers.

Expression of the ptox operon (ntnh-orfX1-orfX2-orfX3-pmp1) in B.thuringiensis kills Anopheles but not Aedes mosquito 3rd instar larvae. The ntnh-pmp1 construct is about half as toxic. This Paraclostridium bifermentans (Clostridium bifermentans) protein is Protein OrfX3.